The sequence spans 122 residues: Ribosomal protein eL22-like 1 (122 aa).

Phosphoserine is present on residues serine 112, serine 118, and serine 120.

It belongs to the eukaryotic ribosomal protein eL22 family.

The polypeptide is Ribosomal protein eL22-like 1 (Rpl22l1) (Mus musculus (Mouse)).